A 137-amino-acid chain; its full sequence is Nucleoside diphosphate kinase (137 aa).

K9, F57, R85, T91, R102, and N112 together coordinate ATP. H115 (pros-phosphohistidine intermediate) is an active-site residue.

It belongs to the NDK family. In terms of assembly, homotetramer. Mg(2+) serves as cofactor.

It is found in the cytoplasm. The catalysed reaction is a 2'-deoxyribonucleoside 5'-diphosphate + ATP = a 2'-deoxyribonucleoside 5'-triphosphate + ADP. The enzyme catalyses a ribonucleoside 5'-diphosphate + ATP = a ribonucleoside 5'-triphosphate + ADP. Its function is as follows. Major role in the synthesis of nucleoside triphosphates other than ATP. The ATP gamma phosphate is transferred to the NDP beta phosphate via a ping-pong mechanism, using a phosphorylated active-site intermediate. This chain is Nucleoside diphosphate kinase, found in Syntrophotalea carbinolica (strain DSM 2380 / NBRC 103641 / GraBd1) (Pelobacter carbinolicus).